Here is a 351-residue protein sequence, read N- to C-terminus: uncharacterized protein (351 aa).

Positions 14–69 (PRLADIAAQAQVSEATASRVLNGRPASRXSTRQRVLAALDLLGYERPTRLRRRSAG) constitute an HTH lacI-type domain. The H-T-H motif DNA-binding region spans 16–35 (LADIAAQAQVSEATASRVLN).

Putative sugar-binding regulatory protein for the alpha-amylase gene. This is an uncharacterized protein from Streptomyces limosus (Streptomyces albidoflavus).